Reading from the N-terminus, the 134-residue chain is Larval cuticle protein A3A (134 aa).

Repeat unit 1 spans residues 23-26 (AAPV). Residues 38-80 (DPHPQYSYGYDIQDGLTGDSKNQQETRDGDVVQGSYSLVDPDG) are disordered. The Chitin-binding type R&amp;R domain maps to 40–106 (HPQYSYGYDI…AVVHREPLVA (67 aa)). Repeat unit 2 spans residues 111–114 (AAPA).

Component of the cuticle of the larva of Tenebrio molitor. This chain is Larval cuticle protein A3A, found in Tenebrio molitor (Yellow mealworm beetle).